Consider the following 245-residue polypeptide: Zinc import ATP-binding protein ZnuC (245 aa).

An ABC transporter domain is found at L27–N244. An ATP-binding site is contributed by G59 to T66.

Belongs to the ABC transporter superfamily. Zinc importer (TC 3.A.1.15.5) family. The complex is composed of two ATP-binding proteins (ZnuC), two transmembrane proteins (ZnuB) and a solute-binding protein (ZnuA).

Its subcellular location is the cell inner membrane. It carries out the reaction Zn(2+)(out) + ATP(in) + H2O(in) = Zn(2+)(in) + ADP(in) + phosphate(in) + H(+)(in). Functionally, part of the ABC transporter complex ZnuABC involved in zinc import. Responsible for energy coupling to the transport system. This chain is Zinc import ATP-binding protein ZnuC, found in Anaplasma marginale (strain St. Maries).